The following is a 146-amino-acid chain: Protein translocase subunit SecE (146 aa).

A disordered region spans residues 1–81 (MSDERYAASD…KVKKPKKSAD (81 aa)). The span at 10 to 20 (DGGGTEVGSGT) shows a compositional bias: gly residues. Residues 45–54 (RAANASNTGA) are compositionally biased toward polar residues. Residues 69–81 (KEGKVKKPKKSAD) are compositionally biased toward basic and acidic residues. A helical membrane pass occupies residues 118 to 138 (VVLAFLAFMVALVGLADFGLA).

This sequence belongs to the SecE/SEC61-gamma family. As to quaternary structure, component of the Sec protein translocase complex. Heterotrimer consisting of SecY, SecE and SecG subunits. The heterotrimers can form oligomers, although 1 heterotrimer is thought to be able to translocate proteins. Interacts with the ribosome. Interacts with SecDF, and other proteins may be involved. Interacts with SecA.

It is found in the cell membrane. Functionally, essential subunit of the Sec protein translocation channel SecYEG. Clamps together the 2 halves of SecY. May contact the channel plug during translocation. This is Protein translocase subunit SecE from Mycobacterium leprae (strain TN).